The following is an 834-amino-acid chain: Membrane-associated lipoprotein (834 aa).

A signal peptide spans 1–25; the sequence is MKKNKLTTLALILPITILTPIVIAS. A lipid anchor (N-palmitoyl cysteine) is attached at Cys-26. Cys-26 carries the S-diacylglycerol cysteine lipid modification. The 95-residue stretch at 143 to 237 folds into the Lipoprotein-associated type-17 domain; sequence RLKDTFDFKL…LLEVSGFKSN (95 aa).

The protein localises to the cell membrane. The polypeptide is Membrane-associated lipoprotein (Ureaplasma parvum serovar 3 (strain ATCC 700970)).